The chain runs to 400 residues: Serine/threonine-protein kinase AFC3 (400 aa).

Residues 1 to 29 (MIANGFESMDKERVRKRPRMTWDEAPAEP) form a disordered region. The Protein kinase domain occupies 71–396 (YKILSKMGEG…ANEALDHPFF (326 aa)). Residues 77 to 85 (MGEGTFGRV) and Lys100 each bind ATP. The active-site Proton acceptor is the Asp196.

Belongs to the protein kinase superfamily. CMGC Ser/Thr protein kinase family. Lammer subfamily.

It carries out the reaction L-seryl-[protein] + ATP = O-phospho-L-seryl-[protein] + ADP + H(+). It catalyses the reaction L-threonyl-[protein] + ATP = O-phospho-L-threonyl-[protein] + ADP + H(+). The enzyme catalyses L-tyrosyl-[protein] + ATP = O-phospho-L-tyrosyl-[protein] + ADP + H(+). The chain is Serine/threonine-protein kinase AFC3 (AFC3) from Arabidopsis thaliana (Mouse-ear cress).